Consider the following 313-residue polypeptide: 4-diphosphocytidyl-2-C-methyl-D-erythritol kinase (313 aa).

K29 is an active-site residue. P113–S123 is an ATP binding site. Residue D155 is part of the active site.

This sequence belongs to the GHMP kinase family. IspE subfamily.

It carries out the reaction 4-CDP-2-C-methyl-D-erythritol + ATP = 4-CDP-2-C-methyl-D-erythritol 2-phosphate + ADP + H(+). It functions in the pathway isoprenoid biosynthesis; isopentenyl diphosphate biosynthesis via DXP pathway; isopentenyl diphosphate from 1-deoxy-D-xylulose 5-phosphate: step 3/6. Its function is as follows. Catalyzes the phosphorylation of the position 2 hydroxy group of 4-diphosphocytidyl-2C-methyl-D-erythritol. The protein is 4-diphosphocytidyl-2-C-methyl-D-erythritol kinase of Haemophilus influenzae (strain 86-028NP).